The sequence spans 20 residues: Calreticulin (20 aa).

It belongs to the calreticulin family. Glycosylated.

Its subcellular location is the endoplasmic reticulum lumen. Functionally, molecular calcium-binding chaperone promoting folding, oligomeric assembly and quality control in the ER via the calreticulin/calnexin cycle. This lectin may interact transiently with almost all of the monoglucosylated glycoproteins that are synthesized in the ER. The sequence is that of Calreticulin from Spinacia oleracea (Spinach).